We begin with the raw amino-acid sequence, 487 residues long: 2-succinylbenzoate--CoA ligase (487 aa).

Belongs to the ATP-dependent AMP-binding enzyme family. MenE subfamily.

The catalysed reaction is 2-succinylbenzoate + ATP + CoA = 2-succinylbenzoyl-CoA + AMP + diphosphate. It participates in quinol/quinone metabolism; 1,4-dihydroxy-2-naphthoate biosynthesis; 1,4-dihydroxy-2-naphthoate from chorismate: step 5/7. Its pathway is quinol/quinone metabolism; menaquinone biosynthesis. Its function is as follows. Converts 2-succinylbenzoate (OSB) to 2-succinylbenzoyl-CoA (OSB-CoA). This is 2-succinylbenzoate--CoA ligase from Bacillus velezensis (strain DSM 23117 / BGSC 10A6 / LMG 26770 / FZB42) (Bacillus amyloliquefaciens subsp. plantarum).